A 208-amino-acid chain; its full sequence is ATP-dependent Clp protease proteolytic subunit 1 (208 aa).

Ser-108 (nucleophile) is an active-site residue. Residue His-133 is part of the active site.

Belongs to the peptidase S14 family. Fourteen ClpP subunits assemble into 2 heptameric rings which stack back to back to give a disk-like structure with a central cavity, resembling the structure of eukaryotic proteasomes.

The protein localises to the cytoplasm. It catalyses the reaction Hydrolysis of proteins to small peptides in the presence of ATP and magnesium. alpha-casein is the usual test substrate. In the absence of ATP, only oligopeptides shorter than five residues are hydrolyzed (such as succinyl-Leu-Tyr-|-NHMec, and Leu-Tyr-Leu-|-Tyr-Trp, in which cleavage of the -Tyr-|-Leu- and -Tyr-|-Trp bonds also occurs).. Its function is as follows. Cleaves peptides in various proteins in a process that requires ATP hydrolysis. Has a chymotrypsin-like activity. Plays a major role in the degradation of misfolded proteins. This chain is ATP-dependent Clp protease proteolytic subunit 1, found in Corynebacterium glutamicum (strain ATCC 13032 / DSM 20300 / JCM 1318 / BCRC 11384 / CCUG 27702 / LMG 3730 / NBRC 12168 / NCIMB 10025 / NRRL B-2784 / 534).